The sequence spans 681 residues: PAB-dependent poly(A)-specific ribonuclease subunit pan3-like (681 aa).

Residues 9–38 (FSTNIPCRNEQLYGRCPYIDKGCFFQHKNQ) form a C3H1-type zinc finger. Disordered regions lie at residues 38–58 (QDNA…PQNS) and 82–123 (SSAS…TVSL). The segment covering 41–50 (APASSKPPSA) has biased composition (low complexity). Over residues 96–106 (KSYSSALSSGK) the composition is skewed to polar residues. Serine 165 carries the phosphoserine modification.

It belongs to the protein kinase superfamily. PAN3 family.

It localises to the cytoplasm. Functionally, regulatory subunit of the poly(A)-nuclease (PAN) deadenylation complex. The polypeptide is PAB-dependent poly(A)-specific ribonuclease subunit pan3-like (Schizosaccharomyces pombe (strain 972 / ATCC 24843) (Fission yeast)).